The following is a 326-amino-acid chain: tRNA-modifying protein YgfZ (326 aa).

Folate contacts are provided by Trp27 and Trp189.

Belongs to the tRNA-modifying YgfZ family.

The protein localises to the cytoplasm. Folate-binding protein involved in regulating the level of ATP-DnaA and in the modification of some tRNAs. It is probably a key factor in regulatory networks that act via tRNA modification, such as initiation of chromosomal replication. This Escherichia fergusonii (strain ATCC 35469 / DSM 13698 / CCUG 18766 / IAM 14443 / JCM 21226 / LMG 7866 / NBRC 102419 / NCTC 12128 / CDC 0568-73) protein is tRNA-modifying protein YgfZ.